We begin with the raw amino-acid sequence, 483 residues long: 5-hydroxytryptamine receptor 3A (483 aa).

The N-terminal stretch at 1–23 (MPLCIPQVLLALFLSVLIAQGEG) is a signal peptide. Residues 24-246 (SRRRATQAHS…MKFYVVIRRR (223 aa)) are Extracellular-facing. Residues Asn-109, Asn-175, and Asn-191 are each glycosylated (N-linked (GlcNAc...) asparagine). A disulfide bridge links Cys-162 with Cys-176. Residues 247-273 (PLFYAVSLLLPSIFLMVVDIVGFCLPP) form a helical membrane-spanning segment. The Cytoplasmic portion of the chain corresponds to 274 to 278 (DSGER). The chain crosses the membrane as a helical span at residues 279–297 (VSFKITLLLGYSVFLIIVS). Topologically, residues 298 to 307 (DTLPATAIGT) are extracellular. A helical membrane pass occupies residues 308–326 (PLIGVYFVVCMALLVISLA). The Cytoplasmic portion of the chain corresponds to 327-460 (ETIFIVQLVH…GYVLDRLLFR (134 aa)). The interval 393–414 (VGSPQDLEKTSRSRDSPLPPPR) is disordered. Residues 398-407 (DLEKTSRSRD) show a composition bias toward basic and acidic residues. Residues 419 to 455 (AVRGLLQELSSIRHSLEKRDEMREVARDWLRVGYVLD) form an HA-stretch; determines single-channel conductance in 5-HT3 receptors region. The helical transmembrane segment at 461–480 (IYLLAVLAYSITLVTLWSIW) threads the bilayer. Topologically, residues 481 to 483 (HYS) are extracellular.

This sequence belongs to the ligand-gated ion channel (TC 1.A.9) family. 5-hydroxytryptamine receptor (TC 1.A.9.2) subfamily. HTR3A sub-subfamily. As to quaternary structure, forms homopentameric as well as heteropentameric serotonin-activated cation-selective channel complexes with HTR3B or HTR3C or HTR3D or HTR3E. The homomeric complex is functional but exhibits low conductance with modified voltage dependence, and decreased agonist and antagonist affinity. Heteropentameric complexes display properties which resemble that of neuronal serotonin-activated channels in vivo. Interacts with RIC3. As to expression, expressed in central and peripheral neurons.

Its subcellular location is the postsynaptic cell membrane. It localises to the cell membrane. It catalyses the reaction Na(+)(in) = Na(+)(out). The catalysed reaction is K(+)(in) = K(+)(out). It carries out the reaction Ca(2+)(in) = Ca(2+)(out). The enzyme catalyses Mg(2+)(in) = Mg(2+)(out). Its function is as follows. Forms serotonin (5-hydroxytryptamine/5-HT3)-activated cation-selective channel complexes, which when activated cause fast, depolarizing responses in neurons. The chain is 5-hydroxytryptamine receptor 3A from Rattus norvegicus (Rat).